We begin with the raw amino-acid sequence, 918 residues long: Glutamate receptor 2.5 (918 aa).

The N-terminal stretch at 1 to 30 (MSLFHHLVSRFLSLWLLIFLVFLVLSLGKS) is a signal peptide. Residues 31–586 (QKEALQVKVG…WVFLKPLTKE (556 aa)) lie on the Extracellular side of the membrane. Asparagine 46, asparagine 58, asparagine 122, asparagine 336, asparagine 340, and asparagine 546 each carry an N-linked (GlcNAc...) asparagine glycan. A helical transmembrane segment spans residues 587–607 (LWLVTAASFLYIGIMVWIFEY). Residues 608-616 (QADEEFREQ) lie on the Cytoplasmic side of the membrane. A helical membrane pass occupies residues 617 to 637 (MIIDKISSVFYFSFSTLFFAH). At 638 to 647 (RRPSESFFTR) the chain is on the cytoplasmic side. The chain crosses the membrane as a helical span at residues 648 to 668 (VLVVVWCFVLLILTQSYTATL). Residues 669–828 (TSMLTVQELR…DSPIQLDHHS (160 aa)) are Extracellular-facing. Asparagine 791 is a glycosylation site (N-linked (GlcNAc...) asparagine). Residues 829–849 (FEALFLIVFVVSVILLLLMLA) form a helical membrane-spanning segment. Residues 850–918 (SRGYQERQHN…VAPLSRLKSA (69 aa)) lie on the Cytoplasmic side of the membrane. A disordered region spans residues 857–881 (QHNASPNLPNDQANAAQEEVNEEGN). Low complexity predominate over residues 866–881 (NDQANAAQEEVNEEGN).

It belongs to the glutamate-gated ion channel (TC 1.A.10.1) family. As to quaternary structure, may form heteromers. In terms of tissue distribution, expressed predominantly in roots.

Its subcellular location is the membrane. In terms of biological role, glutamate-gated receptor that probably acts as a non-selective cation channel. May be involved in light-signal transduction and calcium homeostasis via the regulation of calcium influx into cells. This Arabidopsis thaliana (Mouse-ear cress) protein is Glutamate receptor 2.5 (GLR2.5).